The chain runs to 306 residues: Ribosomal protein L11 methyltransferase (306 aa).

The S-adenosyl-L-methionine site is built by Thr154, Gly179, Asp201, and Asn242.

This sequence belongs to the methyltransferase superfamily. PrmA family.

The protein localises to the cytoplasm. It carries out the reaction L-lysyl-[protein] + 3 S-adenosyl-L-methionine = N(6),N(6),N(6)-trimethyl-L-lysyl-[protein] + 3 S-adenosyl-L-homocysteine + 3 H(+). Methylates ribosomal protein L11. This chain is Ribosomal protein L11 methyltransferase, found in Xanthomonas axonopodis pv. citri (strain 306).